The chain runs to 226 residues: UPF0758 protein PsycPRwf_0491 (226 aa).

The 123-residue stretch at 102–224 (SLNRSQVVKD…TLSFAETATA (123 aa)) folds into the MPN domain. 3 residues coordinate Zn(2+): His-173, His-175, and Asp-186. Positions 173–186 (HNHPNQDATPSAAD) match the JAMM motif motif.

This sequence belongs to the UPF0758 family.

The protein is UPF0758 protein PsycPRwf_0491 of Psychrobacter sp. (strain PRwf-1).